A 307-amino-acid chain; its full sequence is Major pollen allergen Lol p 5a (307 aa).

An N-terminal signal peptide occupies residues 1–25 (MAVQKYTVALFLAVALVAGPAASYA).

It belongs to the Poa p IX/Phl p VI allergen family. As to expression, pollen, starch granules.

The sequence is that of Major pollen allergen Lol p 5a (LOLPIB) from Lolium perenne (Perennial ryegrass).